A 497-amino-acid polypeptide reads, in one-letter code: Probable FAD-binding monooxygenase AlmA (497 aa).

A helical transmembrane segment spans residues 4–24 (QVDVLIIGAGISGIGLAVHLS). FAD is bound by residues Ser-15, Glu-36, Asp-56, Phe-62, and Val-104. NADP(+) is bound at residue 54 to 56 (RSD). Residues 184–190 (SGATAIT), 208–209 (RS), and 292–293 (RL) each bind NADP(+). Val-395 is a binding site for FAD.

The protein belongs to the FAD-binding monooxygenase family. FAD is required as a cofactor.

It localises to the cell membrane. It participates in hydrocarbon metabolism; alkane degradation. In terms of biological role, is involved in the degradation of n-alkanes with C chain lengths of 32 and longer. Allows Acinetobacter sp. strain DSM 17874 to grow on long-chain n-alkanes such as dotriacontane (C32H66) or hexatriacontane (C36H74) as a sole carbon source. The protein is Probable FAD-binding monooxygenase AlmA of Acinetobacter sp.